The chain runs to 377 residues: Peptidyl-prolyl cis-trans isomerase D (377 aa).

One can recognise a PPIase cyclophilin-type domain in the interval 11-178 (YFDIQIGSQK…TDVTIVDCGE (168 aa)). 3 TPR repeats span residues 220 to 253 (ASELKNFGNTAFKSGDVALGLDKYQKGLRYLNEF), 273 to 306 (FTLHSNSSLLANKLGQYKNAQNWATYALEVADAA), and 314 to 347 (AKAYYRRAVAYSGQKEEDEALKDLQEALKLAPGD).

This sequence belongs to the cyclophilin-type PPIase family. PPIase D subfamily.

The protein localises to the cytoplasm. It catalyses the reaction [protein]-peptidylproline (omega=180) = [protein]-peptidylproline (omega=0). Its function is as follows. PPIases accelerate the folding of proteins. It catalyzes the cis-trans isomerization of proline imidic peptide bonds in oligopeptides. This Aspergillus fumigatus (strain ATCC MYA-4609 / CBS 101355 / FGSC A1100 / Af293) (Neosartorya fumigata) protein is Peptidyl-prolyl cis-trans isomerase D (cpr6).